Here is a 149-residue protein sequence, read N- to C-terminus: Arginine regulator (149 aa).

The protein belongs to the ArgR family.

It is found in the cytoplasm. It functions in the pathway amino-acid degradation; L-arginine degradation via ADI pathway. In terms of biological role, regulates the transcription of the arc operon, involved in arginine catabolism. This Bacillus cereus (strain ATCC 10987 / NRS 248) protein is Arginine regulator (argR1).